The sequence spans 171 residues: Ribulose bisphosphate carboxylase small subunit, chloroplastic (171 aa).

Residues 1 to 50 (MATGAGAGAATVVSAFTGLKSTAQFPSSFKMSNAAAEWEQKTTSNGGRVR) constitute a chloroplast transit peptide.

This sequence belongs to the RuBisCO small chain family. In terms of assembly, heterohexadecamer of 8 large and 8 small subunits.

It localises to the plastid. The protein localises to the chloroplast. In terms of biological role, ruBisCO catalyzes two reactions: the carboxylation of D-ribulose 1,5-bisphosphate, the primary event in carbon dioxide fixation, as well as the oxidative fragmentation of the pentose substrate. Both reactions occur simultaneously and in competition at the same active site. Although the small subunit is not catalytic it is essential for maximal activity. This chain is Ribulose bisphosphate carboxylase small subunit, chloroplastic, found in Pinus thunbergii (Japanese black pine).